A 178-amino-acid polypeptide reads, in one-letter code: Germinal center-associated signaling and motility protein (178 aa).

Phosphoserine is present on Ser-99. Position 148 is a phosphotyrosine (Tyr-148).

Interacts with ACTB and MYH2; the interaction with MYH2 is increased by IL6-induced phosphorylation. Interacts (via C-terminus) with ARHGEF11 (via DH domain). Interacts with ARHGEF12. Interacts with SYK; the interaction increases after B-cell receptor stimulation, resulting in enhanced SYK autophosphorylation and activity. Post-translationally, phosphorylation on tyrosine residues can be induced by IL6. Phosphorylation is mediated by LYN. Targeted by the ubiquitin E3 ligase subunit FBXO10 to mediate its ubiquitination and degradation. Expressed in diffuse large B-cell lymphoma (DLBCL) and several germinal center (GC)-like lymphoma cell lines (at protein level). Highly expressed in normal GC lymphocytes and GC-derived malignancies. Expressed in thymus and spleen.

It is found in the cytoplasm. Its subcellular location is the cell membrane. In terms of biological role, involved in the negative regulation of lymphocyte motility. It mediates the migration-inhibitory effects of IL6. Serves as a positive regulator of the RhoA signaling pathway. Enhancement of RhoA activation results in inhibition of lymphocyte and lymphoma cell motility by activation of its downstream effector ROCK. Is a regulator of B-cell receptor signaling, that acts through SYK kinase activation. This Homo sapiens (Human) protein is Germinal center-associated signaling and motility protein (GCSAM).